A 417-amino-acid polypeptide reads, in one-letter code: NADH-quinone oxidoreductase subunit D (417 aa).

Belongs to the complex I 49 kDa subunit family. NDH-1 is composed of 14 different subunits. Subunits NuoB, C, D, E, F, and G constitute the peripheral sector of the complex.

It is found in the cell inner membrane. It catalyses the reaction a quinone + NADH + 5 H(+)(in) = a quinol + NAD(+) + 4 H(+)(out). Functionally, NDH-1 shuttles electrons from NADH, via FMN and iron-sulfur (Fe-S) centers, to quinones in the respiratory chain. The immediate electron acceptor for the enzyme in this species is believed to be ubiquinone. Couples the redox reaction to proton translocation (for every two electrons transferred, four hydrogen ions are translocated across the cytoplasmic membrane), and thus conserves the redox energy in a proton gradient. This is NADH-quinone oxidoreductase subunit D from Nitrosococcus oceani (strain ATCC 19707 / BCRC 17464 / JCM 30415 / NCIMB 11848 / C-107).